Here is a 306-residue protein sequence, read N- to C-terminus: Ribonucleoside-diphosphate reductase small subunit (306 aa).

The Fe cation site is built by Asp-66, Glu-96, and His-99. Tyr-103 is a catalytic residue. Residues 153-173 (ILMILIEGIFFVSSFAAIAYL) traverse the membrane as a helical segment. Fe cation is bound by residues Glu-159, Glu-193, and His-196.

This sequence belongs to the ribonucleoside diphosphate reductase small chain family. As to quaternary structure, heterotetramer composed of a homodimer of the large subunit (R1) and a homodimer of the small subunit (R2). Larger multisubunit protein complex are also active, composed of (R1)n(R2)n. Fe cation serves as cofactor.

Its subcellular location is the host membrane. It carries out the reaction a 2'-deoxyribonucleoside 5'-diphosphate + [thioredoxin]-disulfide + H2O = a ribonucleoside 5'-diphosphate + [thioredoxin]-dithiol. Ribonucleoside-diphosphate reductase holoenzyme provides the precursors necessary for viral DNA synthesis. Allows virus growth in non-dividing cells, as well as reactivation from latency in infected hosts. Catalyzes the biosynthesis of deoxyribonucleotides from the corresponding ribonucleotides. The protein is Ribonucleoside-diphosphate reductase small subunit of Varicella-zoster virus (strain Dumas) (HHV-3).